The sequence spans 264 residues: Thymidylate synthase (264 aa).

R21 lines the dUMP pocket. H51 is a (6R)-5,10-methylene-5,6,7,8-tetrahydrofolate binding site. 126–127 (RR) is a dUMP binding site. C146 acts as the Nucleophile in catalysis. DUMP contacts are provided by residues 166 to 169 (RSAD), N177, and 207 to 209 (HIY). A (6R)-5,10-methylene-5,6,7,8-tetrahydrofolate-binding site is contributed by D169. Residue A263 participates in (6R)-5,10-methylene-5,6,7,8-tetrahydrofolate binding.

It belongs to the thymidylate synthase family. Bacterial-type ThyA subfamily. In terms of assembly, homodimer.

It is found in the cytoplasm. It catalyses the reaction dUMP + (6R)-5,10-methylene-5,6,7,8-tetrahydrofolate = 7,8-dihydrofolate + dTMP. Its pathway is pyrimidine metabolism; dTTP biosynthesis. Catalyzes the reductive methylation of 2'-deoxyuridine-5'-monophosphate (dUMP) to 2'-deoxythymidine-5'-monophosphate (dTMP) while utilizing 5,10-methylenetetrahydrofolate (mTHF) as the methyl donor and reductant in the reaction, yielding dihydrofolate (DHF) as a by-product. This enzymatic reaction provides an intracellular de novo source of dTMP, an essential precursor for DNA biosynthesis. The protein is Thymidylate synthase of Methylobacillus flagellatus (strain ATCC 51484 / DSM 6875 / VKM B-1610 / KT).